Here is a 358-residue protein sequence, read N- to C-terminus: U5 small nuclear ribonucleoprotein 40 kDa protein (358 aa).

K18 is covalently cross-linked (Glycyl lysine isopeptide (Lys-Gly) (interchain with G-Cter in SUMO2)). R21 carries the asymmetric dimethylarginine modification. 7 WD repeats span residues 65 to 104, 108 to 147, 150 to 190, 192 to 231, 234 to 273, 284 to 323, and 326 to 358; these read GHEG…DNYA, GHSG…RVKR, GHTS…AIQT, QNTY…LTYT, GHAD…PKER, NFEK…ILYK, and GHAG…GEIQ. A Glycyl lysine isopeptide (Lys-Gly) (interchain with G-Cter in SUMO2) cross-link involves residue K271.

As to quaternary structure, component of the pre-catalytic and catalytic spliceosome complexes. Component of the postcatalytic spliceosome P complex. Part of the U5 snRNP complex. Interacts with PRPF8. Component of the U4/U6-U5 tri-snRNP complex composed of the U4, U6 and U5 snRNAs and at least PRPF3, PRPF4, PRPF6, PRPF8, PRPF31, SNRNP200, TXNL4A, WDR57, SNRNP40, DDX23, CD2BP2, PPIH, SNU13, EFTUD2, SART1 and USP39. Component of the minor spliceosome, which splices U12-type introns.

The protein localises to the nucleus. In terms of biological role, required for pre-mRNA splicing as component of the activated spliceosome. Component of the U5 small nuclear ribonucleoprotein (snRNP) complex and the U4/U6-U5 tri-snRNP complex, building blocks of the spliceosome. As a component of the minor spliceosome, involved in the splicing of U12-type introns in pre-mRNAs. The polypeptide is U5 small nuclear ribonucleoprotein 40 kDa protein (SNRNP40) (Bos taurus (Bovine)).